The primary structure comprises 506 residues: Lysine--tRNA ligase (506 aa).

Mg(2+)-binding residues include glutamate 416 and glutamate 423.

The protein belongs to the class-II aminoacyl-tRNA synthetase family. As to quaternary structure, homodimer. Mg(2+) is required as a cofactor.

It is found in the cytoplasm. It catalyses the reaction tRNA(Lys) + L-lysine + ATP = L-lysyl-tRNA(Lys) + AMP + diphosphate. The polypeptide is Lysine--tRNA ligase (Xylella fastidiosa (strain M12)).